A 492-amino-acid chain; its full sequence is Probable malate:quinone oxidoreductase 1 (492 aa).

Belongs to the MQO family. It depends on FAD as a cofactor.

It carries out the reaction (S)-malate + a quinone = a quinol + oxaloacetate. It functions in the pathway carbohydrate metabolism; tricarboxylic acid cycle; oxaloacetate from (S)-malate (quinone route): step 1/1. This chain is Probable malate:quinone oxidoreductase 1, found in Staphylococcus aureus (strain MW2).